A 301-amino-acid polypeptide reads, in one-letter code: Multifunctional dioxygenase ausE (301 aa).

Substrate is bound by residues Arg-72 and Gln-127. 2 residues coordinate Fe cation: His-130 and Asp-132. A substrate-binding site is contributed by Thr-167. His-214 is a binding site for Fe cation. Arg-226 contributes to the substrate binding site.

This sequence belongs to the PhyH family. In terms of assembly, homodimer. Fe cation serves as cofactor.

The enzyme catalyses preaustinoid A1 + 2-oxoglutarate + O2 = preaustinoid A2 + succinate + CO2 + H2O. It catalyses the reaction preaustinoid A2 + 2-oxoglutarate + O2 = preaustinoid A3 + succinate + CO2 + H2O. It carries out the reaction berkeleyone A + 2-oxoglutarate + O2 = preaustinoid A + succinate + CO2 + H2O. Its pathway is secondary metabolite biosynthesis; terpenoid biosynthesis. In terms of biological role, multifunctional dioxygenase; part of the gene cluster A that mediates the biosynthesis of the fungal meroterpenoid acetoxydehydroaustin. The first step of the pathway is the synthesis of 3,5-dimethylorsellinic acid by the polyketide synthase ausA. 3,5-dimethylorsellinic acid is then prenylated by the polyprenyl transferase ausN. Further epoxidation by the FAD-dependent monooxygenase ausM and cyclization by the probable terpene cyclase ausL lead to the formation of protoaustinoid A. Protoaustinoid A is then oxidized to spiro-lactone preaustinoid A3 by the combined action of the FAD-binding monooxygenases ausB and ausC, and the dioxygenase ausE. Acid-catalyzed keto-rearrangement and ring contraction of the tetraketide portion of preaustinoid A3 by ausJ lead to the formation of preaustinoid A4. The aldo-keto reductase ausK, with the help of ausH, is involved in the next step by transforming preaustinoid A4 into isoaustinone which is in turn hydroxylated by the P450 monooxygenase ausI to form austinolide. The cytochrome P450 monooxygenase ausG then modifies austinolide to austinol. Austinol is further acetylated to austin by the O-acetyltransferase ausP, which spontaneously changes to dehydroaustin. The cytochrome P450 monooxygenase then converts dehydroaustin is into 7-dehydrodehydroaustin. The hydroxylation catalyzed by ausR permits the second O-acetyltransferase ausQ to add an additional acetyl group to the molecule, leading to the formation of acetoxydehydroaustin. Due to genetic rearrangements of the clusters and the subsequent loss of some enzymes, the end product of the Penicillium brasilianum austinoid biosynthesis clusters is acetoxydehydroaustin. This Penicillium brasilianum protein is Multifunctional dioxygenase ausE.